A 184-amino-acid chain; its full sequence is Elongation factor P (184 aa).

The protein belongs to the elongation factor P family.

The protein resides in the cytoplasm. It participates in protein biosynthesis; polypeptide chain elongation. Involved in peptide bond synthesis. Stimulates efficient translation and peptide-bond synthesis on native or reconstituted 70S ribosomes in vitro. Probably functions indirectly by altering the affinity of the ribosome for aminoacyl-tRNA, thus increasing their reactivity as acceptors for peptidyl transferase. This Leptothrix cholodnii (strain ATCC 51168 / LMG 8142 / SP-6) (Leptothrix discophora (strain SP-6)) protein is Elongation factor P.